The sequence spans 144 residues: Ribonuclease H (144 aa).

An RNase H type-1 domain is found at 1–136 (MKIVTLFSDG…CDQMARNEAL (136 aa)). 4 residues coordinate Mg(2+): aspartate 9, glutamate 47, aspartate 69, and aspartate 128.

This sequence belongs to the RNase H family. Monomer. The cofactor is Mg(2+).

The protein localises to the cytoplasm. It carries out the reaction Endonucleolytic cleavage to 5'-phosphomonoester.. In terms of biological role, endonuclease that specifically degrades the RNA of RNA-DNA hybrids. The chain is Ribonuclease H from Campylobacter concisus (strain 13826).